Here is an 88-residue protein sequence, read N- to C-terminus: UPF0297 protein BT9727_4120 (88 aa).

It belongs to the UPF0297 family.

This is UPF0297 protein BT9727_4120 from Bacillus thuringiensis subsp. konkukian (strain 97-27).